The sequence spans 333 residues: Ephrin-B2 (333 aa).

Residues 1–27 form the signal peptide; the sequence is MAVRRDSVWKYCWGVLMVLCRTAISKS. An Ephrin RBD domain is found at 28-164; that stretch reads IVLEPIYWNS…TRAMKILMKV (137 aa). The Extracellular portion of the chain corresponds to 28 to 229; it reads IVLEPIYWNS…ILGSEVALFA (202 aa). An N-linked (GlcNAc...) asparagine glycan is attached at Asn36. Intrachain disulfides connect Cys62-Cys101 and Cys89-Cys153. Asn139 is a glycosylation site (N-linked (GlcNAc...) asparagine). The disordered stretch occupies residues 165–213; it reads GQDASSAGSTRNKDPTRRPELEAGTNGRSSTTSPFVKPNPGSSTDGNSA. Residues 175-185 show a composition bias toward basic and acidic residues; sequence RNKDPTRRPEL. A compositionally biased stretch (polar residues) spans 190–213; that stretch reads NGRSSTTSPFVKPNPGSSTDGNSA. A helical transmembrane segment spans residues 230–250; it reads GIASGCIIFIVIIITLVVLLL. Residues 251-333 lie on the Cytoplasmic side of the membrane; it reads KYRRRHRKHS…QSPANIYYKV (83 aa). Phosphoserine is present on Ser260. A Phosphothreonine modification is found at Thr274. Residue Arg277 is modified to Omega-N-methylarginine. A PDZ-binding motif is present at residues 331–333; it reads YKV.

Belongs to the ephrin family. In terms of assembly, interacts with PDZRN3. Binds to the receptor tyrosine kinases EPHA4, EPHB4 and EPHA3. (Microbial infection) Interacts with Hendra virus and Nipah virus G protein. Post-translationally, inducible phosphorylation of tyrosine residues in the cytoplasmic domain. In terms of tissue distribution, lung and kidney.

The protein resides in the cell membrane. Its subcellular location is the cell junction. It is found in the adherens junction. Its function is as follows. Cell surface transmembrane ligand for Eph receptors, a family of receptor tyrosine kinases which are crucial for migration, repulsion and adhesion during neuronal, vascular and epithelial development. Binds promiscuously Eph receptors residing on adjacent cells, leading to contact-dependent bidirectional signaling into neighboring cells. The signaling pathway downstream of the receptor is referred to as forward signaling while the signaling pathway downstream of the ephrin ligand is referred to as reverse signaling. Binds to receptor tyrosine kinase including EPHA4, EPHA3 and EPHB4. Together with EPHB4 plays a central role in heart morphogenesis and angiogenesis through regulation of cell adhesion and cell migration. EPHB4-mediated forward signaling controls cellular repulsion and segregation from EFNB2-expressing cells. May play a role in constraining the orientation of longitudinally projecting axons. (Microbial infection) Acts as a receptor for Hendra virus and Nipah virus. This is Ephrin-B2 (EFNB2) from Homo sapiens (Human).